A 514-amino-acid chain; its full sequence is tRNA-2-methylthio-N(6)-dimethylallyladenosine synthase (514 aa).

The tract at residues 1 to 21 (MNEEQRKASSVDVLAERDKKA) is disordered. The region spanning 68–186 (RTFLIKTYGC…LPEILEEAYL (119 aa)) is the MTTase N-terminal domain. The [4Fe-4S] cluster site is built by Cys-77, Cys-113, Cys-147, Cys-223, Cys-227, and Cys-230. The 232-residue stretch at 209–440 (REGNIKAWVN…KKVGHYSQIA (232 aa)) folds into the Radical SAM core domain. In terms of domain architecture, TRAM spans 442-505 (SKYEGQTVTV…QYSLNGSFVK (64 aa)).

It belongs to the methylthiotransferase family. MiaB subfamily. In terms of assembly, monomer. It depends on [4Fe-4S] cluster as a cofactor.

The protein resides in the cytoplasm. The catalysed reaction is N(6)-dimethylallyladenosine(37) in tRNA + (sulfur carrier)-SH + AH2 + 2 S-adenosyl-L-methionine = 2-methylsulfanyl-N(6)-dimethylallyladenosine(37) in tRNA + (sulfur carrier)-H + 5'-deoxyadenosine + L-methionine + A + S-adenosyl-L-homocysteine + 2 H(+). Functionally, catalyzes the methylthiolation of N6-(dimethylallyl)adenosine (i(6)A), leading to the formation of 2-methylthio-N6-(dimethylallyl)adenosine (ms(2)i(6)A) at position 37 in tRNAs that read codons beginning with uridine. The protein is tRNA-2-methylthio-N(6)-dimethylallyladenosine synthase of Staphylococcus aureus (strain N315).